The primary structure comprises 330 residues: Dimethyladenosine transferase 1, mitochondrial (330 aa).

The N-terminal 84 residues, 1-84 (MAQPSARVLQ…RSILRRHPQR (84 aa)), are a transit peptide targeting the mitochondrion. S-adenosyl-L-methionine contacts are provided by residues 38–41 (QNFL), N39, L41, G67, E89, D118, and N140.

This sequence belongs to the class I-like SAM-binding methyltransferase superfamily. rRNA adenine N(6)-methyltransferase family. KsgA subfamily.

The protein resides in the mitochondrion. Functionally, probable S-adenosyl-L-methionine-dependent methyltransferase which specifically dimethylates mitochondrial 12S rRNA at the conserved stem loop. In contrast to mtTFB2, it does not have a critical role in either transcription or regulation of the copy number of mitochondrial DNA. In Drosophila melanogaster (Fruit fly), this protein is Dimethyladenosine transferase 1, mitochondrial (mtTFB1).